Consider the following 253-residue polypeptide: 5'-nucleotidase SurE (253 aa).

A divalent metal cation is bound by residues aspartate 8, aspartate 9, serine 39, and asparagine 91.

It belongs to the SurE nucleotidase family. A divalent metal cation is required as a cofactor.

Its subcellular location is the cytoplasm. The enzyme catalyses a ribonucleoside 5'-phosphate + H2O = a ribonucleoside + phosphate. Nucleotidase that shows phosphatase activity on nucleoside 5'-monophosphates. The protein is 5'-nucleotidase SurE of Albidiferax ferrireducens (strain ATCC BAA-621 / DSM 15236 / T118) (Rhodoferax ferrireducens).